A 73-amino-acid polypeptide reads, in one-letter code: MNLETPSQENLNFMLTEITTKLKMVNVGVFENLELDSVDYNALVDIYQLIKRKSTFSPREMQLFAEELRRVRK.

It belongs to the UPF0435 family.

The sequence is that of UPF0435 protein lmo1707 from Listeria monocytogenes serovar 1/2a (strain ATCC BAA-679 / EGD-e).